Here is a 130-residue protein sequence, read N- to C-terminus: Small ribosomal subunit protein uS9 (130 aa).

The protein belongs to the universal ribosomal protein uS9 family.

This Histophilus somni (strain 129Pt) (Haemophilus somnus) protein is Small ribosomal subunit protein uS9.